A 178-amino-acid chain; its full sequence is MLWVLVGTVLPVMLLAAPPPINKLALFPDKSAWCEAKNITQIVGHSGCEAKSIQNRACLGQCFSYSVPNTFPQSTESLVHCDSCMPAQSMWEIVTLECPGHEEVPRVDKLVEKIVHCSCQACGKEPSHEGLNVYMQGEDGPGSQPGSHSHSHPHPGCQTPEPEEPPGAPQVEEEGAED.

The first 16 residues, methionine 1 to alanine 16, serve as a signal peptide directing secretion. Disulfide bonds link cysteine 34-cysteine 84, cysteine 48-cysteine 98, cysteine 58-cysteine 117, cysteine 62-cysteine 119, and cysteine 81-cysteine 122. The region spanning cysteine 34–glycine 123 is the CTCK domain. Residues glycine 130 to aspartate 178 are disordered.

This sequence belongs to the DAN family. Homodimer. Most abundant in lung, brain, intestine and kidney.

The protein localises to the secreted. Possible candidate as a tumor suppressor gene of neuroblastoma. May play an important role in preventing cells from entering the final stage (G1/S) of the transformation process. This is Neuroblastoma suppressor of tumorigenicity 1 (Nbl1) from Rattus norvegicus (Rat).